The following is a 452-amino-acid chain: Bifunctional protein GlmU (452 aa).

The segment at 1-224 (MNIVILAAGM…VWETHGVNSK (224 aa)) is pyrophosphorylase. Residues 6 to 9 (LAAG), K20, Q71, 76 to 77 (GT), 98 to 100 (YGD), G135, E149, N164, and N222 each bind UDP-N-acetyl-alpha-D-glucosamine. D100 serves as a coordination point for Mg(2+). N222 provides a ligand contact to Mg(2+). The tract at residues 225–245 (VQLAELERVHQNNIARALLEH) is linker. The segment at 246–452 (GVTLADPARI…GWQRPVKIKK (207 aa)) is N-acetyltransferase. 2 residues coordinate UDP-N-acetyl-alpha-D-glucosamine: R328 and K346. Catalysis depends on H358, which acts as the Proton acceptor. 2 residues coordinate UDP-N-acetyl-alpha-D-glucosamine: Y361 and N372. Acetyl-CoA is bound by residues A375, 381 to 382 (NY), S400, A418, and R435.

In the N-terminal section; belongs to the N-acetylglucosamine-1-phosphate uridyltransferase family. The protein in the C-terminal section; belongs to the transferase hexapeptide repeat family. Homotrimer. Mg(2+) serves as cofactor.

The protein localises to the cytoplasm. It carries out the reaction alpha-D-glucosamine 1-phosphate + acetyl-CoA = N-acetyl-alpha-D-glucosamine 1-phosphate + CoA + H(+). It catalyses the reaction N-acetyl-alpha-D-glucosamine 1-phosphate + UTP + H(+) = UDP-N-acetyl-alpha-D-glucosamine + diphosphate. It functions in the pathway nucleotide-sugar biosynthesis; UDP-N-acetyl-alpha-D-glucosamine biosynthesis; N-acetyl-alpha-D-glucosamine 1-phosphate from alpha-D-glucosamine 6-phosphate (route II): step 2/2. It participates in nucleotide-sugar biosynthesis; UDP-N-acetyl-alpha-D-glucosamine biosynthesis; UDP-N-acetyl-alpha-D-glucosamine from N-acetyl-alpha-D-glucosamine 1-phosphate: step 1/1. Its pathway is bacterial outer membrane biogenesis; LPS lipid A biosynthesis. Catalyzes the last two sequential reactions in the de novo biosynthetic pathway for UDP-N-acetylglucosamine (UDP-GlcNAc). The C-terminal domain catalyzes the transfer of acetyl group from acetyl coenzyme A to glucosamine-1-phosphate (GlcN-1-P) to produce N-acetylglucosamine-1-phosphate (GlcNAc-1-P), which is converted into UDP-GlcNAc by the transfer of uridine 5-monophosphate (from uridine 5-triphosphate), a reaction catalyzed by the N-terminal domain. In Herminiimonas arsenicoxydans, this protein is Bifunctional protein GlmU.